A 149-amino-acid chain; its full sequence is MVYKTKLGEIEISDESIFTFEKGIPGFEHLRKFALVFPQETFPIGWLLSLEDSEVGLPVVDPKLVRADYDPAVPSEDLEEIEAENQEALLFFCVLTIPPGKPEKTTINLRAPIILNQKKKKGIQTILENEDYQLRHLLSEEIERSKTVV.

It belongs to the FliW family. In terms of assembly, interacts with translational regulator CsrA and flagellin(s).

The protein resides in the cytoplasm. Acts as an anti-CsrA protein, binds CsrA and prevents it from repressing translation of its target genes, one of which is flagellin. Binds to flagellin and participates in the assembly of the flagellum. This Thermotoga maritima (strain ATCC 43589 / DSM 3109 / JCM 10099 / NBRC 100826 / MSB8) protein is Flagellar assembly factor FliW.